The primary structure comprises 372 residues: Pyruvylated Gal-beta-1,3-epitope synthesis protein 5 (372 aa).

The Cytoplasmic segment spans residues 1 to 12 (MGLPLRIFAGNG). Residues 13–35 (IGGWCLRLFLFGSLILLLRPLIF) traverse the membrane as a helical; Signal-anchor for type II membrane protein segment. The Lumenal segment spans residues 36–372 (YSNTTMKKLK…LRIIEQWKQL (337 aa)). N-linked (GlcNAc...) asparagine glycosylation is found at Asn38 and Asn128.

It is found in the golgi apparatus membrane. In terms of biological role, involved in cell wall biogenesis. Has a role in the addition of Gal-beta1,3 moeities to galactomannans and their subsequent pyruvylation. Has a role in meiosis. The polypeptide is Pyruvylated Gal-beta-1,3-epitope synthesis protein 5 (pvg5) (Schizosaccharomyces pombe (strain 972 / ATCC 24843) (Fission yeast)).